The chain runs to 546 residues: Glutamyl-tRNA(Gln) amidotransferase subunit A, chloroplastic/mitochondrial (546 aa).

The interval 21–52 (KRRRFHSSTPLFLSQPQTLASTDPPSSPPQSQ) is disordered. The span at 27–43 (SSTPLFLSQPQTLASTD) shows a compositional bias: polar residues. Residues Lys-123 and Ser-198 each act as charge relay system in the active site. Ser-222 acts as the Acyl-ester intermediate in catalysis.

Belongs to the amidase family. GatA subfamily. Subunit of the heterotrimeric GatCAB amidotransferase (AdT) complex, composed of A, B and C subunits.

It is found in the mitochondrion. The protein resides in the plastid. Its subcellular location is the chloroplast stroma. The catalysed reaction is L-glutamyl-tRNA(Gln) + L-glutamine + ATP + H2O = L-glutaminyl-tRNA(Gln) + L-glutamate + ADP + phosphate + H(+). Its function is as follows. Allows the formation of correctly charged Gln-tRNA(Gln) through the transamidation of misacylated Glu-tRNA(Gln) in chloroplasts and mitochondria. The reaction takes place in the presence of glutamine and ATP through an activated gamma-phospho-Glu-tRNA(Gln). The sequence is that of Glutamyl-tRNA(Gln) amidotransferase subunit A, chloroplastic/mitochondrial from Vitis vinifera (Grape).